The chain runs to 249 residues: Small ribosomal subunit protein eS6 (249 aa).

Basic residues predominate over residues 223–238 (LRQRDHSKKHTQKVHA). A disordered region spans residues 223-249 (LRQRDHSKKHTQKVHAQRAEVAAFQKK).

It belongs to the eukaryotic ribosomal protein eS6 family. Component of the small ribosomal subunit. Part of the small subunit (SSU) processome, composed of more than 70 proteins and the RNA chaperone small nucleolar RNA (snoRNA) U3. In terms of processing, ribosomal protein S6 is the major substrate of protein kinases in eukaryote ribosomes.

It localises to the cytoplasm. Its subcellular location is the nucleus. The protein localises to the nucleolus. In terms of biological role, component of the 40S small ribosomal subunit. Plays an important role in controlling cell growth and proliferation through the selective translation of particular classes of mRNA. Part of the small subunit (SSU) processome, first precursor of the small eukaryotic ribosomal subunit. During the assembly of the SSU processome in the nucleolus, many ribosome biogenesis factors, an RNA chaperone and ribosomal proteins associate with the nascent pre-rRNA and work in concert to generate RNA folding, modifications, rearrangements and cleavage as well as targeted degradation of pre-ribosomal RNA by the RNA exosome. The polypeptide is Small ribosomal subunit protein eS6 (RPS6) (Leishmania infantum).